Consider the following 687-residue polypeptide: Complement C1s subcomponent (687 aa).

Residues 1-15 (MWCIVLLSLLAWVDA) form the signal peptide. The region spanning 16 to 130 (EPTMYGEILS…TGFAAYYVAV (115 aa)) is the CUB 1 domain. The Ca(2+) site is built by Glu60, Asp68, Asp113, Asp131, Val132, and Glu134. The cysteines at positions 65 and 83 are disulfide-linked. The 42-residue stretch at 131 to 172 (DVNECTDFADSPCSHFCNNYIGGYFCSCPPEYFLHEDKKNCG) folds into the EGF-like; calcium-binding domain. Disulfide bonds link Cys135-Cys147, Cys143-Cys156, and Cys158-Cys171. The Ca(2+) site is built by Asn149, Tyr150, and Gly153. Asn149 carries the post-translational modification (3R)-3-hydroxyasparagine. Asn174 carries an N-linked (GlcNAc...) asparagine glycan. Disulfide bonds link Cys175–Cys202, Cys234–Cys251, Cys294–Cys341, Cys321–Cys354, Cys359–Cys403, Cys386–Cys421, Cys425–Cys548, Cys594–Cys617, and Cys626–Cys658. Residues 175–290 (CSGDVFTTLI…KGWKFRYHGD (116 aa)) enclose the CUB 2 domain. Sushi domains follow at residues 292–356 (IPCP…RCQP) and 357–423 (VDCG…KCVP). Asn406 is a glycosylation site (N-linked (GlcNAc...) asparagine). The 242-residue stretch at 438–679 (IFGGIITKIE…YIDWIRETMQ (242 aa)) folds into the Peptidase S1 domain. Residues His475 and Asp528 each act as charge relay system in the active site. The Charge relay system role is filled by Ser630.

It belongs to the peptidase S1 family. C1 is a calcium-dependent trimolecular complex of C1q, C1r and C1s in the molar ration of 1:2:2. Activated C1s is an disulfide-linked heterodimer of a heavy chain and a light chain. Post-translationally, the iron and 2-oxoglutarate dependent 3-hydroxylation of aspartate and asparagine is (R) stereospecific within EGF domains.

It catalyses the reaction Cleavage of Arg-|-Ala bond in complement component C4 to form C4a and C4b, and Lys(or Arg)-|-Lys bond in complement component C2 to form C2a and C2b: the 'classical' pathway C3 convertase.. Inhibited by SERPING1. C1s B chain is a serine protease that combines with C1q and C1r to form C1, the first component of the classical pathway of the complement system. C1r activates C1s so that it can, in turn, activate C2 and C4. Also cleaves IGFBP5 and thereby inhibits the trophic effects of IGF1. This is Complement C1s subcomponent from Sus scrofa (Pig).